We begin with the raw amino-acid sequence, 220 residues long: MTKILIVEDEQNLARFIELELEHENYDVDIEYDGKPGLEKALSNTYDLILLDLMLPNINGLEICRQIRQNQTTPIIIITAKSDTYDKVAGLDYGADDYIVKPFDIEELLARIRAMLRRQPQKNLIDIKGIIIDKDAFKVTVDGQPLDLTKTEYDLLFLLVENRNHVLQREQIITDVWGYDTEVETNVVDVYIRYLRNKLKPFGKDKCIETVRGVGYVVRQ.

In terms of domain architecture, Response regulatory spans Lys3 to Leu116. Residue Asp52 is modified to 4-aspartylphosphate. A DNA-binding region (ompR/PhoB-type) is located at residues Lys122–Gln220.

Post-translationally, phosphorylated by ArlS.

The protein resides in the cytoplasm. Its function is as follows. Member of the two-component regulatory system ArlS/ArlR. In Staphylococcus saprophyticus subsp. saprophyticus (strain ATCC 15305 / DSM 20229 / NCIMB 8711 / NCTC 7292 / S-41), this protein is Response regulator ArlR (arlR).